We begin with the raw amino-acid sequence, 326 residues long: 4-hydroxy-3-methylbut-2-enyl diphosphate reductase (326 aa).

Residue Cys22 participates in [4Fe-4S] cluster binding. The (2E)-4-hydroxy-3-methylbut-2-enyl diphosphate site is built by His51 and His84. His51 and His84 together coordinate dimethylallyl diphosphate. Residues His51 and His84 each coordinate isopentenyl diphosphate. Cys106 is a [4Fe-4S] cluster binding site. Residue His134 participates in (2E)-4-hydroxy-3-methylbut-2-enyl diphosphate binding. His134 contacts dimethylallyl diphosphate. His134 is a binding site for isopentenyl diphosphate. Residue Glu136 is the Proton donor of the active site. Thr174 contributes to the (2E)-4-hydroxy-3-methylbut-2-enyl diphosphate binding site. Cys204 provides a ligand contact to [4Fe-4S] cluster. Ser232, Ser233, Asn234, and Ser276 together coordinate (2E)-4-hydroxy-3-methylbut-2-enyl diphosphate. The dimethylallyl diphosphate site is built by Ser232, Ser233, Asn234, and Ser276. Residues Ser232, Ser233, Asn234, and Ser276 each coordinate isopentenyl diphosphate.

It belongs to the IspH family. It depends on [4Fe-4S] cluster as a cofactor.

It carries out the reaction isopentenyl diphosphate + 2 oxidized [2Fe-2S]-[ferredoxin] + H2O = (2E)-4-hydroxy-3-methylbut-2-enyl diphosphate + 2 reduced [2Fe-2S]-[ferredoxin] + 2 H(+). It catalyses the reaction dimethylallyl diphosphate + 2 oxidized [2Fe-2S]-[ferredoxin] + H2O = (2E)-4-hydroxy-3-methylbut-2-enyl diphosphate + 2 reduced [2Fe-2S]-[ferredoxin] + 2 H(+). The protein operates within isoprenoid biosynthesis; dimethylallyl diphosphate biosynthesis; dimethylallyl diphosphate from (2E)-4-hydroxy-3-methylbutenyl diphosphate: step 1/1. Its pathway is isoprenoid biosynthesis; isopentenyl diphosphate biosynthesis via DXP pathway; isopentenyl diphosphate from 1-deoxy-D-xylulose 5-phosphate: step 6/6. In terms of biological role, catalyzes the conversion of 1-hydroxy-2-methyl-2-(E)-butenyl 4-diphosphate (HMBPP) into a mixture of isopentenyl diphosphate (IPP) and dimethylallyl diphosphate (DMAPP). Acts in the terminal step of the DOXP/MEP pathway for isoprenoid precursor biosynthesis. In Bordetella parapertussis (strain 12822 / ATCC BAA-587 / NCTC 13253), this protein is 4-hydroxy-3-methylbut-2-enyl diphosphate reductase.